The sequence spans 110 residues: UPF0060 membrane protein PBPRB0495 (110 aa).

The next 4 membrane-spanning stretches (helical) occupy residues 7 to 27, 33 to 53, 63 to 83, and 85 to 105; these read VGLFFITAIAEIIGCYLPYLW, TIWLLIPAAISLALFAWLLTL, AAYGGVYIFTAILWLWLVDGI, and PTVWDFVGVFVALLGMAIIMF.

Belongs to the UPF0060 family.

It is found in the cell inner membrane. The protein is UPF0060 membrane protein PBPRB0495 of Photobacterium profundum (strain SS9).